The chain runs to 29 residues: Cyclotide psyleio C (29 aa).

The segment at residues 1–29 is a cross-link (cyclopeptide (Gly-Arg)); that stretch reads GDLPVCGETCFGGTCNTPGCVCAWPVCTR. Disulfide bonds link C6–C20, C10–C22, and C15–C27.

This is a cyclic peptide.

In terms of biological role, probably participates in a plant defense mechanism. This is Cyclotide psyleio C from Psychotria leiocarpa.